Consider the following 500-residue polypeptide: 2-isopropylmalate synthase (500 aa).

A Pyruvate carboxyltransferase domain is found at 5–266 (LFIFDTTLRD…ITNITTNKIY (262 aa)). The Mn(2+) site is built by Asp14, His202, His204, and Asn238. Residues 389–500 (KLEYLQVTSG…VDAINKFIVD (112 aa)) form a regulatory domain region.

This sequence belongs to the alpha-IPM synthase/homocitrate synthase family. LeuA type 1 subfamily. In terms of assembly, homodimer. Requires Mn(2+) as cofactor.

The protein localises to the cytoplasm. It catalyses the reaction 3-methyl-2-oxobutanoate + acetyl-CoA + H2O = (2S)-2-isopropylmalate + CoA + H(+). Its pathway is amino-acid biosynthesis; L-leucine biosynthesis; L-leucine from 3-methyl-2-oxobutanoate: step 1/4. Functionally, catalyzes the condensation of the acetyl group of acetyl-CoA with 3-methyl-2-oxobutanoate (2-ketoisovalerate) to form 3-carboxy-3-hydroxy-4-methylpentanoate (2-isopropylmalate). In Parabacteroides distasonis (strain ATCC 8503 / DSM 20701 / CIP 104284 / JCM 5825 / NCTC 11152), this protein is 2-isopropylmalate synthase.